The sequence spans 781 residues: LPS-assembly protein LptD (781 aa).

A signal peptide spans 1–24; that stretch reads MKKNYYTVLSLSILTALYSTSSQA.

This sequence belongs to the LptD family. In terms of assembly, component of the lipopolysaccharide transport and assembly complex. Interacts with LptE and LptA.

Its subcellular location is the cell outer membrane. Its function is as follows. Together with LptE, is involved in the assembly of lipopolysaccharide (LPS) at the surface of the outer membrane. This is LPS-assembly protein LptD from Histophilus somni (strain 129Pt) (Haemophilus somnus).